The sequence spans 123 residues: UPF0482 protein YE2026 (123 aa).

An N-terminal signal peptide occupies residues 1 to 31; it reads MKITSLPRLMRVFLPVAVLALPLAWQTAALA. The segment at 47–66 is disordered; that stretch reads GNNDPMSKEQARQSQQQWDD.

This sequence belongs to the UPF0482 family.

This is UPF0482 protein YE2026 from Yersinia enterocolitica serotype O:8 / biotype 1B (strain NCTC 13174 / 8081).